The sequence spans 683 residues: DNA ligase (683 aa).

Residues 35-39 (DADYD), 84-85 (SL), and Glu115 contribute to the NAD(+) site. The active-site N6-AMP-lysine intermediate is the Lys117. 4 residues coordinate NAD(+): Arg138, Glu175, Lys293, and Lys317. Zn(2+) is bound by residues Cys411, Cys414, Cys429, and Cys435. One can recognise a BRCT domain in the interval 598 to 683 (QTNSAVSGKT…LQNISTGAQQ (86 aa)).

It belongs to the NAD-dependent DNA ligase family. LigA subfamily. Mg(2+) serves as cofactor. The cofactor is Mn(2+).

It carries out the reaction NAD(+) + (deoxyribonucleotide)n-3'-hydroxyl + 5'-phospho-(deoxyribonucleotide)m = (deoxyribonucleotide)n+m + AMP + beta-nicotinamide D-nucleotide.. In terms of biological role, DNA ligase that catalyzes the formation of phosphodiester linkages between 5'-phosphoryl and 3'-hydroxyl groups in double-stranded DNA using NAD as a coenzyme and as the energy source for the reaction. It is essential for DNA replication and repair of damaged DNA. The polypeptide is DNA ligase (Nitrosomonas eutropha (strain DSM 101675 / C91 / Nm57)).